Here is a 241-residue protein sequence, read N- to C-terminus: Golgi-associated RAB2 interactor protein 6 (241 aa).

It belongs to the GARIN family.

The chain is Golgi-associated RAB2 interactor protein 6 from Homo sapiens (Human).